The sequence spans 503 residues: EZH inhibitory protein (503 aa).

A compositionally biased stretch (basic and acidic residues) spans 1–16; that stretch reads MATQSDMEKEQKHQQD. 3 disordered regions span residues 1 to 72, 97 to 462, and 483 to 503; these read MATQ…AAAA, HSDR…RSIS, and VPPE…PPEP. Over residues 41–72 the composition is skewed to low complexity; that stretch reads PAASVTTVSSQASPSGGAALSSSTAGSSAAAA. The span at 97–107 shows a compositional bias: basic and acidic residues; the sequence is HSDRQDCRSPH. The segment covering 184-197 has biased composition (polar residues); the sequence is YPCSGASTSSQATQ. The residue at position 259 (Ser259) is a Phosphoserine. The segment covering 345–366 has biased composition (low complexity); it reads LRSRSTQQRSALLSRRSLSGSA. The tract at residues 401–409 is sufficient for interaction with EZH2; that stretch reads WHAVRMRAS. The tract at residues 403–423 is necessary and sufficient for inhibition of PRC2/EED-EZH1 and PRC2/EED-EZH2 complex activity; sequence AVRMRASSPSPPGRFFLPIPQ. The span at 428–453 shows a compositional bias: low complexity; sequence SSSSSYASNSSSPSRSPGLSPSSPSP.

As to quaternary structure, interacts with PRC2/EED-EZH1 complex member EZH1 and with PRC2/EED-EZH2 complex member EZH2; the interaction blocks EZH1/EZH2 methyltransferase activity. Interacts (via C-terminus) with SUZ12 which is a member of the PRC2/EED-EZH1 and PRC2/EED-EZH2 complexes. In terms of tissue distribution, in testis, detected in male germ cells inside the seminiferous tubules, especially in spermatogonia and round spermatids (at protein level). In the ovary, expressed in primordial follicles and oocytes but not the external follicle cells (at protein level).

It localises to the nucleus. The protein localises to the cytoplasm. Its function is as follows. Inhibits PRC2/EED-EZH1 and PRC2/EED-EZH2 complex function by inhibiting EZH1/EZH2 methyltransferase activity, thereby causing down-regulation of histone H3 trimethylation on 'Lys-27' (H3K27me3). Probably inhibits methyltransferase activity by limiting the stimulatory effect of cofactors such as AEBP2 and JARID2. Inhibits H3K27me3 deposition during spermatogenesis and oogenesis. This Homo sapiens (Human) protein is EZH inhibitory protein.